Consider the following 351-residue polypeptide: MPSLRAHVFRVPADGPDDVAGVEALFASGLQANNVVAVLGKTEGNGCVNDFTRGYATRSFETLFSRYGVDGVSIIMSGGTEGALSPHWTVFARETVETPGERALAIGVSRTPALPPEHLGRREQILLVAEGVKSAMRDAGIDDPADVHFVQIKCPLLTSRRIAEAEAAGRTVATHDTLKSMGLSRGASALGVAVALGEIDATSIGDADICTRFDLFSRCASTSSGGELTDHEIIVLGMSAKWSGPLSIDHAVMLDAIDAHSVRKARERLPENSRLAAVLAKAEPDPSGRIDGRRHTMLDDSDIAGTRHARAFVGGVLAGIFGITDLYVSGGAEHQGPPGGGPVAIIVEKEQ.

Residues 1–96 (MPSLRAHVFR…HWTVFARETV (96 aa)) are RU A. Residues R53 and 77–78 (SG) contribute to the substrate site. Residues 103–240 (ALAIGVSRTP…HEIIVLGMSA (138 aa)) form an RU B region. The active site involves K153. Residues R185 and 223–224 (SS) contribute to the substrate site. Residue S223 is the Nucleophile of the active site. An RU C region spans residues 246–351 (LSIDHAVMLD…PVAIIVEKEQ (106 aa)). E283 is a Mg(2+) binding site. Substrate is bound by residues R310 and 329 to 330 (SG). The Mg(2+) site is built by A332, Q335, G336, P337, and G340.

Belongs to the cyclic amide hydrolase (CyAH) family. Homotetramer.

It carries out the reaction cyanurate + H2O = 1-carboxybiuret + H(+). Its pathway is xenobiotic degradation; atrazine degradation; biuret from cyanurate: step 1/1. Its activity is regulated as follows. Inhibited by barbituric acid. Its function is as follows. Responsible for the hydrolysis of cyanuric acid, an intermediate formed during catabolism of s-triazine based compounds in herbicides such as atrazine and polymers such as melamine. Catalyzes the hydrolytic opening of the s-triazine ring of cyanuric acid (2,4,6-trihydroxy-s-triazine) to yield carbon dioxide and carboxybiuret, which spontaneously decarboxylates to biuret. This Rhizobium leguminosarum bv. trifolii (strain WSM1325) protein is Cyanuric acid amidohydrolase.